A 285-amino-acid polypeptide reads, in one-letter code: Neuralized-like protein 2 (285 aa).

Positions 1 to 28 (MADPSEHVGLGGPRSPARPEPPPTRFHQ) are disordered. The NHR domain occupies 23–244 (PTRFHQVHGA…STKSVRLVQL (222 aa)). In terms of domain architecture, SOCS box spans 250 to 285 (SLQTLCRLVIHKRVVHRLAIDVLHLPKGLKDFCKYE).

As to quaternary structure, probable component the ECS(NEURL2) E3 ubiquitin-protein ligase complex consisting of ELOB/Elongin B, ELOC/Elongin C, CUL5, RBX1 and NEURL2. Interacts with CTNNB1. Expressed specifically in skeletal and cardiac muscles.

It localises to the cytoplasm. It functions in the pathway protein modification; protein ubiquitination. Its function is as follows. Plays an important role in the process of myofiber differentiation and maturation. Probable substrate-recognition component of a SCF-like ECS (Elongin BC-CUL2/5-SOCS-box protein) E3 ubiquitin-protein ligase complex, which mediates the ubiquitination of proteins. Probably contributes to catalysis through recognition and positioning of the substrate and the ubiquitin-conjugating enzyme. During myogenesis, controls the ubiquitination and degradation of the specific pool of CTNNB1/beta-catenin located at the sarcolemma. In Mus musculus (Mouse), this protein is Neuralized-like protein 2 (Neurl2).